The primary structure comprises 182 residues: Large ribosomal subunit protein uL5 (182 aa).

The protein belongs to the universal ribosomal protein uL5 family. As to quaternary structure, part of the 50S ribosomal subunit; part of the 5S rRNA/L5/L18/L25 subcomplex. Contacts the 5S rRNA and the P site tRNA. Forms a bridge to the 30S subunit in the 70S ribosome.

This is one of the proteins that bind and probably mediate the attachment of the 5S RNA into the large ribosomal subunit, where it forms part of the central protuberance. In the 70S ribosome it contacts protein S13 of the 30S subunit (bridge B1b), connecting the 2 subunits; this bridge is implicated in subunit movement. Contacts the P site tRNA; the 5S rRNA and some of its associated proteins might help stabilize positioning of ribosome-bound tRNAs. This is Large ribosomal subunit protein uL5 from Trichormus variabilis (strain ATCC 29413 / PCC 7937) (Anabaena variabilis).